Reading from the N-terminus, the 272-residue chain is Shikimate dehydrogenase (NADP(+)) (272 aa).

Residues 14 to 16 (SKS) and Thr-61 contribute to the shikimate site. The active-site Proton acceptor is Lys-65. Residue Glu-77 participates in NADP(+) binding. Shikimate is bound by residues Asn-86 and Asp-102. Residues 126–130 (GAGGA), 149–154 (NRTVSR), and Met-213 each bind NADP(+). Residue Tyr-215 coordinates shikimate. Residue Gly-237 coordinates NADP(+).

It belongs to the shikimate dehydrogenase family. As to quaternary structure, homodimer.

The enzyme catalyses shikimate + NADP(+) = 3-dehydroshikimate + NADPH + H(+). It participates in metabolic intermediate biosynthesis; chorismate biosynthesis; chorismate from D-erythrose 4-phosphate and phosphoenolpyruvate: step 4/7. Involved in the biosynthesis of the chorismate, which leads to the biosynthesis of aromatic amino acids. Catalyzes the reversible NADPH linked reduction of 3-dehydroshikimate (DHSA) to yield shikimate (SA). This is Shikimate dehydrogenase (NADP(+)) from Escherichia coli O7:K1 (strain IAI39 / ExPEC).